The following is a 446-amino-acid chain: Argininosuccinate lyase (446 aa).

This sequence belongs to the lyase 1 family. Argininosuccinate lyase subfamily.

The protein resides in the cytoplasm. The enzyme catalyses 2-(N(omega)-L-arginino)succinate = fumarate + L-arginine. Its pathway is amino-acid biosynthesis; L-arginine biosynthesis; L-arginine from L-ornithine and carbamoyl phosphate: step 3/3. This Bacteroides thetaiotaomicron (strain ATCC 29148 / DSM 2079 / JCM 5827 / CCUG 10774 / NCTC 10582 / VPI-5482 / E50) protein is Argininosuccinate lyase.